A 209-amino-acid chain; its full sequence is Thymidylate kinase (209 aa).

7-14 lines the ATP pocket; the sequence is GVEGSGKS.

This sequence belongs to the thymidylate kinase family.

It carries out the reaction dTMP + ATP = dTDP + ADP. In terms of biological role, phosphorylation of dTMP to form dTDP in both de novo and salvage pathways of dTTP synthesis. The sequence is that of Thymidylate kinase from Solidesulfovibrio magneticus (strain ATCC 700980 / DSM 13731 / RS-1) (Desulfovibrio magneticus).